We begin with the raw amino-acid sequence, 60 residues long: uncharacterized protein (60 aa).

The chain crosses the membrane as a helical span at residues 14–34 (MLFLGTIGLAVVVGGLMAYGY). Positions 38–60 (GKTPSSGTSFHTASPSFSSRYRY) are disordered. Residues 40-60 (TPSSGTSFHTASPSFSSRYRY) are compositionally biased toward polar residues.

The protein resides in the host membrane. This is an uncharacterized protein from Dryophytes versicolor (chameleon treefrog).